We begin with the raw amino-acid sequence, 317 residues long: MHNYLDFEKPISDLEGKILELKKLASEDESVNTSDEIARLEGRVRDAMVEIYSKLSPWQKTQVARHPSRPHFLDYASRLFTEFTPLAGDRNFANDDAIQAGLARFRGAPVAVIGQEKGNDTKSRIKHNFGSPRPEGYRKATRIMEMADRFGLPLITLVDTAGAYPGVNAEERGQAEAIARSTEMCLNVKVPIVTVVIGEGGSGGAIAIATGNRVYMLEHAIYSVISPEGAASILWRDSTRAKEAASNMKITAEDLKSLGVIDGIIPEPIGGGHRDPDAVISRTEAVIGDALKELSARSGDELRSDRRQKYLNIGRNL.

Residues 40-293 (LEGRVRDAMV…EAVIGDALKE (254 aa)) form the CoA carboxyltransferase C-terminal domain.

This sequence belongs to the AccA family. In terms of assembly, acetyl-CoA carboxylase is a heterohexamer composed of biotin carboxyl carrier protein (AccB), biotin carboxylase (AccC) and two subunits each of ACCase subunit alpha (AccA) and ACCase subunit beta (AccD).

Its subcellular location is the cytoplasm. The enzyme catalyses N(6)-carboxybiotinyl-L-lysyl-[protein] + acetyl-CoA = N(6)-biotinyl-L-lysyl-[protein] + malonyl-CoA. Its pathway is lipid metabolism; malonyl-CoA biosynthesis; malonyl-CoA from acetyl-CoA: step 1/1. In terms of biological role, component of the acetyl coenzyme A carboxylase (ACC) complex. First, biotin carboxylase catalyzes the carboxylation of biotin on its carrier protein (BCCP) and then the CO(2) group is transferred by the carboxyltransferase to acetyl-CoA to form malonyl-CoA. The chain is Acetyl-coenzyme A carboxylase carboxyl transferase subunit alpha from Sinorhizobium medicae (strain WSM419) (Ensifer medicae).